The chain runs to 172 residues: MDLKQYVSEVEDWPKPGVNFKDITTIMDNGEAYGYATDQIVEYAKLRDVDIIVGPEARGFIIGCPVAYSMGIGFAPVRKEGKLPREVIRYEYDLEYGTNVLTMHKDAIKPGQRVLITDDLLATGGTIEAAIKLVEKLGGIVVGIAFIIELKYLNGIEKIKDYDVMSLISYED.

The protein belongs to the purine/pyrimidine phosphoribosyltransferase family. In terms of assembly, homodimer.

Its subcellular location is the cytoplasm. The enzyme catalyses AMP + diphosphate = 5-phospho-alpha-D-ribose 1-diphosphate + adenine. Its pathway is purine metabolism; AMP biosynthesis via salvage pathway; AMP from adenine: step 1/1. Catalyzes a salvage reaction resulting in the formation of AMP, that is energically less costly than de novo synthesis. The protein is Adenine phosphoribosyltransferase of Staphylococcus saprophyticus subsp. saprophyticus (strain ATCC 15305 / DSM 20229 / NCIMB 8711 / NCTC 7292 / S-41).